A 648-amino-acid chain; its full sequence is Chaperone protein HtpG (648 aa).

Residues 1–349 (MTTEHAAGAQ…SSDLPLNVSR (349 aa)) are a; substrate-binding. Residues 350 to 570 (EILQESKDID…EHDVGMNLAR (221 aa)) are b. The c stretch occupies residues 571-648 (ILKAAGQQAP…MAMGGSAGTD (78 aa)).

The protein belongs to the heat shock protein 90 family. In terms of assembly, homodimer.

It localises to the cytoplasm. Functionally, molecular chaperone. Has ATPase activity. The chain is Chaperone protein HtpG from Aromatoleum aromaticum (strain DSM 19018 / LMG 30748 / EbN1) (Azoarcus sp. (strain EbN1)).